The primary structure comprises 192 residues: Ion-translocating oxidoreductase complex subunit A (192 aa).

The next 6 membrane-spanning stretches (helical) occupy residues 5–25 (LLLL…FLGL), 39–59 (IGMS…SYLV), 65–85 (LPFD…AVVV), 102–122 (ALGI…VALL), 134–154 (AIYG…FSAM), and 171–191 (AIAM…TGLV).

This sequence belongs to the NqrDE/RnfAE family. In terms of assembly, the complex is composed of six subunits: RnfA, RnfB, RnfC, RnfD, RnfE and RnfG.

It is found in the cell inner membrane. Functionally, part of a membrane-bound complex that couples electron transfer with translocation of ions across the membrane. The chain is Ion-translocating oxidoreductase complex subunit A from Shewanella oneidensis (strain ATCC 700550 / JCM 31522 / CIP 106686 / LMG 19005 / NCIMB 14063 / MR-1).